The following is a 164-amino-acid chain: Crossover junction endodeoxyribonuclease RuvC (164 aa).

Residues D7, E67, and D140 contribute to the active site. The Mg(2+) site is built by D7, E67, and D140.

The protein belongs to the RuvC family. Homodimer which binds Holliday junction (HJ) DNA. The HJ becomes 2-fold symmetrical on binding to RuvC with unstacked arms; it has a different conformation from HJ DNA in complex with RuvA. In the full resolvosome a probable DNA-RuvA(4)-RuvB(12)-RuvC(2) complex forms which resolves the HJ. The cofactor is Mg(2+).

The protein resides in the cytoplasm. It catalyses the reaction Endonucleolytic cleavage at a junction such as a reciprocal single-stranded crossover between two homologous DNA duplexes (Holliday junction).. Its function is as follows. The RuvA-RuvB-RuvC complex processes Holliday junction (HJ) DNA during genetic recombination and DNA repair. Endonuclease that resolves HJ intermediates. Cleaves cruciform DNA by making single-stranded nicks across the HJ at symmetrical positions within the homologous arms, yielding a 5'-phosphate and a 3'-hydroxyl group; requires a central core of homology in the junction. The consensus cleavage sequence is 5'-(A/T)TT(C/G)-3'. Cleavage occurs on the 3'-side of the TT dinucleotide at the point of strand exchange. HJ branch migration catalyzed by RuvA-RuvB allows RuvC to scan DNA until it finds its consensus sequence, where it cleaves and resolves the cruciform DNA. This Pelotomaculum thermopropionicum (strain DSM 13744 / JCM 10971 / SI) protein is Crossover junction endodeoxyribonuclease RuvC.